We begin with the raw amino-acid sequence, 99 residues long: Transcriptional regulator WhiB2 (99 aa).

The 4Fe-4S Wbl-type domain occupies 33-90; the sequence is LCAQTDPEAFFPEKGGSTRDAKRVCAKCEVREQCLKWAIDHDERFGIWGGMSERERRR. Positions 34, 57, 60, and 66 each coordinate [4Fe-4S] cluster.

It belongs to the WhiB family. It depends on [4Fe-4S] cluster as a cofactor. In terms of processing, the Fe-S cluster can be nitrosylated by nitric oxide (NO). Upon Fe-S cluster removal intramolecular disulfide bonds are formed.

It is found in the cytoplasm. Its function is as follows. Acts as a transcriptional regulator. Probably redox-responsive. The apo- but not holo-form probably binds DNA. The protein is Transcriptional regulator WhiB2 (whiB2) of Bifidobacterium longum (strain NCC 2705).